The sequence spans 207 residues: LexA repressor (207 aa).

The segment at residues 28–48 (RAEISRELGFKSANAAEEHLK) is a DNA-binding region (H-T-H motif). Active-site for autocatalytic cleavage activity residues include S123 and K160.

It belongs to the peptidase S24 family. As to quaternary structure, homodimer.

The catalysed reaction is Hydrolysis of Ala-|-Gly bond in repressor LexA.. Its function is as follows. Represses a number of genes involved in the response to DNA damage (SOS response), including recA and lexA. In the presence of single-stranded DNA, RecA interacts with LexA causing an autocatalytic cleavage which disrupts the DNA-binding part of LexA, leading to derepression of the SOS regulon and eventually DNA repair. The protein is LexA repressor of Haemophilus influenzae (strain 86-028NP).